The primary structure comprises 333 residues: Beta-ketoacyl-[acyl-carrier-protein] synthase III (333 aa).

Active-site residues include cysteine 112 and histidine 255. Positions 256 to 260 (QANQR) are ACP-binding. Asparagine 285 is an active-site residue.

This sequence belongs to the thiolase-like superfamily. FabH family. Homodimer.

The protein resides in the cytoplasm. The catalysed reaction is malonyl-[ACP] + acetyl-CoA + H(+) = 3-oxobutanoyl-[ACP] + CO2 + CoA. The protein operates within lipid metabolism; fatty acid biosynthesis. Catalyzes the condensation reaction of fatty acid synthesis by the addition to an acyl acceptor of two carbons from malonyl-ACP. Catalyzes the first condensation reaction which initiates fatty acid synthesis and may therefore play a role in governing the total rate of fatty acid production. Possesses both acetoacetyl-ACP synthase and acetyl transacylase activities. Its substrate specificity determines the biosynthesis of branched-chain and/or straight-chain of fatty acids. The sequence is that of Beta-ketoacyl-[acyl-carrier-protein] synthase III from Synechococcus sp. (strain RCC307).